Consider the following 381-residue polypeptide: Queuine tRNA-ribosyltransferase (381 aa).

The active-site Proton acceptor is the Asp-92. Substrate-binding positions include 92 to 96, Asp-146, Gln-190, and Gly-217; that span reads DSGGF. The interval 248-254 is RNA binding; sequence GVGRPED. Catalysis depends on Asp-267, which acts as the Nucleophile. Residues 272–276 form an RNA binding; important for wobble base 34 recognition region; sequence TRNAR. Cys-305, Cys-307, Cys-310, and His-337 together coordinate Zn(2+).

Belongs to the queuine tRNA-ribosyltransferase family. Homodimer. Within each dimer, one monomer is responsible for RNA recognition and catalysis, while the other monomer binds to the replacement base PreQ1. It depends on Zn(2+) as a cofactor.

It carries out the reaction 7-aminomethyl-7-carbaguanine + guanosine(34) in tRNA = 7-aminomethyl-7-carbaguanosine(34) in tRNA + guanine. It participates in tRNA modification; tRNA-queuosine biosynthesis. In terms of biological role, catalyzes the base-exchange of a guanine (G) residue with the queuine precursor 7-aminomethyl-7-deazaguanine (PreQ1) at position 34 (anticodon wobble position) in tRNAs with GU(N) anticodons (tRNA-Asp, -Asn, -His and -Tyr). Catalysis occurs through a double-displacement mechanism. The nucleophile active site attacks the C1' of nucleotide 34 to detach the guanine base from the RNA, forming a covalent enzyme-RNA intermediate. The proton acceptor active site deprotonates the incoming PreQ1, allowing a nucleophilic attack on the C1' of the ribose to form the product. After dissociation, two additional enzymatic reactions on the tRNA convert PreQ1 to queuine (Q), resulting in the hypermodified nucleoside queuosine (7-(((4,5-cis-dihydroxy-2-cyclopenten-1-yl)amino)methyl)-7-deazaguanosine). The chain is Queuine tRNA-ribosyltransferase from Xanthomonas euvesicatoria pv. vesicatoria (strain 85-10) (Xanthomonas campestris pv. vesicatoria).